The sequence spans 243 residues: Ribonuclease 3 (243 aa).

Positions 10–146 (VNRFRKRFDT…FIGALYLDQG (137 aa)) constitute an RNase III domain. Glutamate 59 contributes to the Mg(2+) binding site. Aspartate 63 is a catalytic residue. Residues aspartate 132 and glutamate 135 each coordinate Mg(2+). Glutamate 135 is an active-site residue. The DRBM domain occupies 172-241 (DFKTQFQEYV…AKSAYKQLKQ (70 aa)). Residues 219–231 (GKGKTKKESEQRA) are compositionally biased toward basic and acidic residues. Residues 219-243 (GKGKTKKESEQRAAKSAYKQLKQIK) form a disordered region.

The protein belongs to the ribonuclease III family. As to quaternary structure, homodimer. It depends on Mg(2+) as a cofactor.

The protein localises to the cytoplasm. The catalysed reaction is Endonucleolytic cleavage to 5'-phosphomonoester.. Digests double-stranded RNA. Involved in the processing of primary rRNA transcript to yield the immediate precursors to the large and small rRNAs (23S and 16S). Processes some mRNAs, and tRNAs when they are encoded in the rRNA operon. Processes pre-crRNA and tracrRNA of type II CRISPR loci if present in the organism. The sequence is that of Ribonuclease 3 from Staphylococcus aureus (strain Mu3 / ATCC 700698).